Reading from the N-terminus, the 27-residue chain is Protamine-B (27 aa).

Residues 1–27 (ARRRRRSSRPQRRRRRRRHGRRRRGRR) are disordered.

In terms of tissue distribution, testis.

It localises to the nucleus. The protein localises to the chromosome. In terms of biological role, protamines substitute for histones in the chromatin of sperm during the haploid phase of spermatogenesis. They compact sperm DNA into a highly condensed, stable and inactive complex. This chain is Protamine-B, found in Acipenser stellatus (Sevruga).